A 348-amino-acid chain; its full sequence is Spermatogenesis-associated protein 32 (348 aa).

Over residues 27–36 the composition is skewed to basic and acidic residues; the sequence is YHHHHHPLED. Residues 27–61 are disordered; sequence YHHHHHPLEDNKDEDNEMGTELSSMKPPPKVDPDP. A phosphoserine mark is found at serine 149 and serine 152. Residues 308 to 329 form a disordered region; it reads APATSPELQEDKDDSVPGTKKG. Phosphothreonine is present on threonine 330.

As to quaternary structure, interacts with syntaxin-1 and ACTB. As to expression, abundantly expressed in testes. Expressed in germ cells, but not in Sertoli or Leydig cells of the adult testis. Localized at the acrosomal region of the round and elongated spermatids at stages VIII-X.

This Rattus norvegicus (Rat) protein is Spermatogenesis-associated protein 32 (Spata32).